A 227-amino-acid polypeptide reads, in one-letter code: Cytochrome c oxidase subunit 2 (227 aa).

At 1–14 the chain is on the mitochondrial intermembrane side; it reads MAYPFQLGLQDATS. The helical transmembrane segment at 15 to 45 threads the bilayer; that stretch reads PIMEELLHFHDHTLMIVFLISSLVLYIISLM. Residues 46–59 are Mitochondrial matrix-facing; that stretch reads LTTKLTHTSTMDAQ. A helical transmembrane segment spans residues 60-87; that stretch reads EVETVWTILPAIILILIALPSLRILYMM. The Mitochondrial intermembrane portion of the chain corresponds to 88 to 227; that stretch reads DEINNPSLTV…YFETWSALMV (140 aa). Residues His-161, Cys-196, Glu-198, Cys-200, His-204, and Met-207 each coordinate Cu cation. Glu-198 serves as a coordination point for Mg(2+). Tyr-218 bears the Phosphotyrosine mark.

This sequence belongs to the cytochrome c oxidase subunit 2 family. Component of the cytochrome c oxidase (complex IV, CIV), a multisubunit enzyme composed of 14 subunits. The complex is composed of a catalytic core of 3 subunits MT-CO1, MT-CO2 and MT-CO3, encoded in the mitochondrial DNA, and 11 supernumerary subunits COX4I, COX5A, COX5B, COX6A, COX6B, COX6C, COX7A, COX7B, COX7C, COX8 and NDUFA4, which are encoded in the nuclear genome. The complex exists as a monomer or a dimer and forms supercomplexes (SCs) in the inner mitochondrial membrane with NADH-ubiquinone oxidoreductase (complex I, CI) and ubiquinol-cytochrome c oxidoreductase (cytochrome b-c1 complex, complex III, CIII), resulting in different assemblies (supercomplex SCI(1)III(2)IV(1) and megacomplex MCI(2)III(2)IV(2)). Found in a complex with TMEM177, COA6, COX18, COX20, SCO1 and SCO2. Interacts with TMEM177 in a COX20-dependent manner. Interacts with COX20. Interacts with COX16. Cu cation serves as cofactor.

The protein localises to the mitochondrion inner membrane. It catalyses the reaction 4 Fe(II)-[cytochrome c] + O2 + 8 H(+)(in) = 4 Fe(III)-[cytochrome c] + 2 H2O + 4 H(+)(out). Its function is as follows. Component of the cytochrome c oxidase, the last enzyme in the mitochondrial electron transport chain which drives oxidative phosphorylation. The respiratory chain contains 3 multisubunit complexes succinate dehydrogenase (complex II, CII), ubiquinol-cytochrome c oxidoreductase (cytochrome b-c1 complex, complex III, CIII) and cytochrome c oxidase (complex IV, CIV), that cooperate to transfer electrons derived from NADH and succinate to molecular oxygen, creating an electrochemical gradient over the inner membrane that drives transmembrane transport and the ATP synthase. Cytochrome c oxidase is the component of the respiratory chain that catalyzes the reduction of oxygen to water. Electrons originating from reduced cytochrome c in the intermembrane space (IMS) are transferred via the dinuclear copper A center (CU(A)) of subunit 2 and heme A of subunit 1 to the active site in subunit 1, a binuclear center (BNC) formed by heme A3 and copper B (CU(B)). The BNC reduces molecular oxygen to 2 water molecules using 4 electrons from cytochrome c in the IMS and 4 protons from the mitochondrial matrix. The sequence is that of Cytochrome c oxidase subunit 2 (MT-CO2) from Urocyon cinereoargenteus (Gray fox).